The following is a 391-amino-acid chain: Homocysteine-responsive endoplasmic reticulum-resident ubiquitin-like domain member 1 protein (391 aa).

Methionine 1 carries the N-acetylmethionine modification. The Cytoplasmic segment spans residues 1-263 (MEPEPQPEPV…VEEDDEINRD (263 aa)). One can recognise a Ubiquitin-like domain in the interval 10 to 72 (VTLLVKSPNQ…LLDHQCLQDL (63 aa)). A disordered region spans residues 90–126 (NPSKMPETSTKGAESTEQPDNSNQTQHPGDSSSDGLR). Polar residues predominate over residues 95-124 (PETSTKGAESTEQPDNSNQTQHPGDSSSDG). An interaction with UBQLN1 region spans residues 115–200 (QHPGDSSSDG…ASGTFVPTPS (86 aa)). Phosphoserine is present on serine 135. Residues 264–284 (WLDWTYSAATFSVFLSILYFY) form a helical membrane-spanning segment. The Lumenal portion of the chain corresponds to 285–289 (SSLSR). Residues 290-310 (FLMVMGATVVMYLHHVGWFPF) form a helical membrane-spanning segment. At 311 to 391 (RQRPVQNFPD…LPEGPPALAN (81 aa)) the chain is on the cytoplasmic side. The interval 317 to 361 (NFPDDGGPRDAANQDPNNNLQGGMDPEMEDPNRLPPDREVLDPEH) is disordered. Residues 346 to 361 (DPNRLPPDREVLDPEH) are compositionally biased toward basic and acidic residues.

As to quaternary structure, interacts with PSEN1 and PSEN2. Interacts with UBXN6. Interacts with UBQLN1, UBQLN2 and UBQLN4. Component of the HRD1 complex, which comprises at least SYNV1/HRD1, FAM8A1, HERPUD1/HERP, OS9, SEL1L and UBE2J1. FAM8A1 binding to SYNV1 may promote recruitment of HERPUD1 to the HRD1 complex.

It localises to the endoplasmic reticulum membrane. Its function is as follows. Component of the endoplasmic reticulum quality control (ERQC) system also called ER-associated degradation (ERAD) involved in ubiquitin-dependent degradation of misfolded endoplasmic reticulum proteins. Binds to ubiquilins and this interaction is required for efficient degradation of CD3D via the ERAD pathway. The protein is Homocysteine-responsive endoplasmic reticulum-resident ubiquitin-like domain member 1 protein (Herpud1) of Mus musculus (Mouse).